Consider the following 34-residue polypeptide: Cytochrome b6-f complex subunit 7 (34 aa).

The chain crosses the membrane as a helical span at residues 9–29 (ALLSFGLIFVGWALGALLLKI).

It belongs to the PetM family. In terms of assembly, the 4 large subunits of the cytochrome b6-f complex are cytochrome b6, subunit IV (17 kDa polypeptide, PetD), cytochrome f and the Rieske protein, while the 4 small subunits are PetG, PetL, PetM and PetN. The complex functions as a dimer.

The protein resides in the cellular thylakoid membrane. Its function is as follows. Component of the cytochrome b6-f complex, which mediates electron transfer between photosystem II (PSII) and photosystem I (PSI), cyclic electron flow around PSI, and state transitions. In Nostoc sp. (strain PCC 7120 / SAG 25.82 / UTEX 2576), this protein is Cytochrome b6-f complex subunit 7.